Consider the following 473-residue polypeptide: Photosystem II CP43 reaction center protein (473 aa).

Positions 1-14 are excised as a propeptide; the sequence is MKTLYSLRRFYHVE. Thr-15 is modified (N-acetylthreonine). The residue at position 15 (Thr-15) is a Phosphothreonine. The next 5 helical transmembrane spans lie at 69-93, 134-155, 178-200, 255-275, and 291-312; these read LFEV…PHLA, LLGP…KDRN, KALY…RKIA, KPFA…LSYS, and WFNN…ASQA. A [CaMn4O5] cluster-binding site is contributed by Glu-367. A helical transmembrane segment spans residues 447-471; the sequence is RARAAAAGFEKGIDRDFEPVLSMTP.

Belongs to the PsbB/PsbC family. PsbC subfamily. As to quaternary structure, PSII is composed of 1 copy each of membrane proteins PsbA, PsbB, PsbC, PsbD, PsbE, PsbF, PsbH, PsbI, PsbJ, PsbK, PsbL, PsbM, PsbT, PsbX, PsbY, PsbZ, Psb30/Ycf12, at least 3 peripheral proteins of the oxygen-evolving complex and a large number of cofactors. It forms dimeric complexes. Binds multiple chlorophylls and provides some of the ligands for the Ca-4Mn-5O cluster of the oxygen-evolving complex. It may also provide a ligand for a Cl- that is required for oxygen evolution. PSII binds additional chlorophylls, carotenoids and specific lipids. serves as cofactor.

It localises to the plastid membrane. In terms of biological role, one of the components of the core complex of photosystem II (PSII). It binds chlorophyll and helps catalyze the primary light-induced photochemical processes of PSII. PSII is a light-driven water:plastoquinone oxidoreductase, using light energy to abstract electrons from H(2)O, generating O(2) and a proton gradient subsequently used for ATP formation. The polypeptide is Photosystem II CP43 reaction center protein (Cuscuta exaltata (Tall dodder)).